The primary structure comprises 548 residues: Chaperonin GroEL (548 aa).

Residues 30–33 (TLGP), Lys51, 87–91 (DGTTT), Gly415, 478–480 (NAA), and Asp494 contribute to the ATP site.

The protein belongs to the chaperonin (HSP60) family. In terms of assembly, forms a cylinder of 14 subunits composed of two heptameric rings stacked back-to-back. Interacts with the co-chaperonin GroES.

The protein localises to the cytoplasm. The enzyme catalyses ATP + H2O + a folded polypeptide = ADP + phosphate + an unfolded polypeptide.. Its function is as follows. Together with its co-chaperonin GroES, plays an essential role in assisting protein folding. The GroEL-GroES system forms a nano-cage that allows encapsulation of the non-native substrate proteins and provides a physical environment optimized to promote and accelerate protein folding. The chain is Chaperonin GroEL from Trichlorobacter lovleyi (strain ATCC BAA-1151 / DSM 17278 / SZ) (Geobacter lovleyi).